The chain runs to 271 residues: Glutamate racemase (271 aa).

Substrate-binding positions include 12–13 and 44–45; these read DS and YG. Cys-75 acts as the Proton donor/acceptor in catalysis. Substrate is bound at residue 76 to 77; that stretch reads NT. Cys-185 serves as the catalytic Proton donor/acceptor. 186–187 lines the substrate pocket; the sequence is TH.

The protein belongs to the aspartate/glutamate racemases family.

The enzyme catalyses L-glutamate = D-glutamate. The protein operates within cell wall biogenesis; peptidoglycan biosynthesis. Its function is as follows. Provides the (R)-glutamate required for cell wall biosynthesis. This chain is Glutamate racemase, found in Methylococcus capsulatus (strain ATCC 33009 / NCIMB 11132 / Bath).